Here is a 99-residue protein sequence, read N- to C-terminus: Beta-2-microglobulin (99 aa).

The region spanning 5–92 (PNVQVYSRHP…KHVTLKEPMT (88 aa)) is the Ig-like C1-type domain. An intrachain disulfide couples cysteine 25 to cysteine 80.

It belongs to the beta-2-microglobulin family. Heterodimer of an alpha chain and a beta chain. Beta-2-microglobulin is the beta-chain of major histocompatibility complex class I molecules.

The protein localises to the secreted. Component of the class I major histocompatibility complex (MHC). Involved in the presentation of peptide antigens to the immune system. This chain is Beta-2-microglobulin (B2M), found in Oryctolagus cuniculus (Rabbit).